The chain runs to 243 residues: Cytochrome c1, heme protein (243 aa).

Topologically, residues 1 to 201 (GVDSHPPALP…CSNPWWDERK (201 aa)) are mitochondrial intermembrane. The Cytochrome c domain maps to 5–194 (HPPALPWPHF…VTCFLEWCSN (190 aa)). Residues cysteine 39, histidine 40, and methionine 159 each coordinate heme. Residues 202–221 (LLGYKTIATLAVIAVSSGYY) traverse the membrane as a helical segment. Residues 222-243 (NRFLSGLWRSRRLAFRPFNYSK) are Mitochondrial matrix-facing.

This sequence belongs to the cytochrome c family. As to quaternary structure, component of the ubiquinol-cytochrome c oxidoreductase (cytochrome b-c1 complex, complex III, CIII), a multisubunit enzyme composed of 3 respiratory subunits cytochrome b, cytochrome c1 and Rieske protein, 2 core protein subunits, and additional low-molecular weight protein subunits. The complex exists as an obligatory dimer and forms supercomplexes (SCs) in the inner mitochondrial membrane with cytochrome c oxidase (complex IV, CIV). Heme serves as cofactor.

The protein localises to the mitochondrion inner membrane. The catalysed reaction is a quinol + 2 Fe(III)-[cytochrome c](out) = a quinone + 2 Fe(II)-[cytochrome c](out) + 2 H(+)(out). In terms of biological role, component of the ubiquinol-cytochrome c oxidoreductase, a multisubunit transmembrane complex that is part of the mitochondrial electron transport chain which drives oxidative phosphorylation. The respiratory chain contains 3 multisubunit complexes succinate dehydrogenase (complex II, CII), ubiquinol-cytochrome c oxidoreductase (cytochrome b-c1 complex, complex III, CIII) and cytochrome c oxidase (complex IV, CIV), that cooperate to transfer electrons derived from NADH and succinate to molecular oxygen, creating an electrochemical gradient over the inner membrane that drives transmembrane transport and the ATP synthase. The cytochrome b-c1 complex catalyzes electron transfer from ubiquinol to cytochrome c, linking this redox reaction to translocation of protons across the mitochondrial inner membrane, with protons being carried across the membrane as hydrogens on the quinol. In the process called Q cycle, 2 protons are consumed from the matrix, 4 protons are released into the intermembrane space and 2 electrons are passed to cytochrome c. Cytochrome c1 is a catalytic core subunit containing a c-type heme. It transfers electrons from the [2Fe-2S] iron-sulfur cluster of the Rieske protein to cytochrome c. The sequence is that of Cytochrome c1, heme protein from Euglena gracilis.